Reading from the N-terminus, the 71-residue chain is Protein KleB (71 aa).

Positions 9–28 form a DNA-binding region, H-T-H motif; sequence VTTNCRRCGKSISTLSRSLI.

The polypeptide is Protein KleB (kleB) (Escherichia coli).